A 121-amino-acid chain; its full sequence is Small ribosomal subunit protein uS13 (121 aa).

Residues 92–121 (RKGLPVRGQSSKTNARTVKGPRKTVANKKK) are disordered. The span at 110–121 (KGPRKTVANKKK) shows a compositional bias: basic residues.

The protein belongs to the universal ribosomal protein uS13 family. As to quaternary structure, part of the 30S ribosomal subunit. Forms a loose heterodimer with protein S19. Forms two bridges to the 50S subunit in the 70S ribosome.

Located at the top of the head of the 30S subunit, it contacts several helices of the 16S rRNA. In the 70S ribosome it contacts the 23S rRNA (bridge B1a) and protein L5 of the 50S subunit (bridge B1b), connecting the 2 subunits; these bridges are implicated in subunit movement. Contacts the tRNAs in the A and P-sites. The sequence is that of Small ribosomal subunit protein uS13 from Mycoplasma capricolum subsp. capricolum (strain California kid / ATCC 27343 / NCTC 10154).